The chain runs to 440 residues: Histidinol dehydrogenase (440 aa).

The NAD(+) site is built by Y139, Q201, and N224. 3 residues coordinate substrate: S247, Q269, and H272. Residues Q269 and H272 each coordinate Zn(2+). Catalysis depends on proton acceptor residues E337 and H338. Residues H338, D371, E425, and H430 each contribute to the substrate site. Zn(2+) is bound at residue D371. H430 contacts Zn(2+).

The protein belongs to the histidinol dehydrogenase family. Zn(2+) is required as a cofactor.

The enzyme catalyses L-histidinol + 2 NAD(+) + H2O = L-histidine + 2 NADH + 3 H(+). The protein operates within amino-acid biosynthesis; L-histidine biosynthesis; L-histidine from 5-phospho-alpha-D-ribose 1-diphosphate: step 9/9. Catalyzes the sequential NAD-dependent oxidations of L-histidinol to L-histidinaldehyde and then to L-histidine. The chain is Histidinol dehydrogenase from Prochlorococcus marinus (strain MIT 9312).